Reading from the N-terminus, the 193-residue chain is Fe/S biogenesis protein NfuA (193 aa).

[4Fe-4S] cluster is bound by residues cysteine 150 and cysteine 153.

The protein belongs to the NfuA family. As to quaternary structure, homodimer. Requires [4Fe-4S] cluster as cofactor.

Involved in iron-sulfur cluster biogenesis. Binds a 4Fe-4S cluster, can transfer this cluster to apoproteins, and thereby intervenes in the maturation of Fe/S proteins. Could also act as a scaffold/chaperone for damaged Fe/S proteins. The polypeptide is Fe/S biogenesis protein NfuA (Histophilus somni (strain 129Pt) (Haemophilus somnus)).